The chain runs to 254 residues: Type II restriction enzyme HpaI (254 aa).

It carries out the reaction Endonucleolytic cleavage of DNA to give specific double-stranded fragments with terminal 5'-phosphates.. Its function is as follows. A P subtype restriction enzyme that recognizes the double-stranded sequence 5'-GTTAAC-3' and cleaves after T-3. The protein is Type II restriction enzyme HpaI (hpaIR) of Haemophilus parainfluenzae.